The sequence spans 238 residues: tRNA (guanine-N(7)-)-methyltransferase (238 aa).

Residues 1–12 (MTDTAENQTPND) show a composition bias toward polar residues. The tract at residues 1-20 (MTDTAENQTPNDRQAGHPRS) is disordered. Residues glutamate 70, aspartate 95, aspartate 122, and aspartate 145 each coordinate S-adenosyl-L-methionine. Aspartate 145 is a catalytic residue. Substrate is bound by residues lysine 149, aspartate 181, and 216-219 (TKFE).

Belongs to the class I-like SAM-binding methyltransferase superfamily. TrmB family.

The catalysed reaction is guanosine(46) in tRNA + S-adenosyl-L-methionine = N(7)-methylguanosine(46) in tRNA + S-adenosyl-L-homocysteine. The protein operates within tRNA modification; N(7)-methylguanine-tRNA biosynthesis. In terms of biological role, catalyzes the formation of N(7)-methylguanine at position 46 (m7G46) in tRNA. The chain is tRNA (guanine-N(7)-)-methyltransferase from Neisseria meningitidis serogroup C (strain 053442).